The primary structure comprises 491 residues: Ketol-acid reductoisomerase (NADP(+)) (491 aa).

The region spanning 15–208 (AQLGTCRFME…GGHRAGVLES (194 aa)) is the KARI N-terminal Rossmann domain. NADP(+)-binding positions include 45–48 (CGAQ), Arg-68, Arg-76, Ser-78, and 108–110 (DKQ). His-132 is an active-site residue. Gly-158 provides a ligand contact to NADP(+). KARI C-terminal knotted domains follow at residues 209 to 353 (SFVA…KEQE) and 354 to 486 (YFDK…MTAM). Mg(2+) is bound by residues Asp-217, Glu-221, Glu-389, and Glu-393. Residue Ser-414 coordinates substrate.

It belongs to the ketol-acid reductoisomerase family. Mg(2+) serves as cofactor.

It catalyses the reaction (2R)-2,3-dihydroxy-3-methylbutanoate + NADP(+) = (2S)-2-acetolactate + NADPH + H(+). It carries out the reaction (2R,3R)-2,3-dihydroxy-3-methylpentanoate + NADP(+) = (S)-2-ethyl-2-hydroxy-3-oxobutanoate + NADPH + H(+). It functions in the pathway amino-acid biosynthesis; L-isoleucine biosynthesis; L-isoleucine from 2-oxobutanoate: step 2/4. It participates in amino-acid biosynthesis; L-valine biosynthesis; L-valine from pyruvate: step 2/4. In terms of biological role, involved in the biosynthesis of branched-chain amino acids (BCAA). Catalyzes an alkyl-migration followed by a ketol-acid reduction of (S)-2-acetolactate (S2AL) to yield (R)-2,3-dihydroxy-isovalerate. In the isomerase reaction, S2AL is rearranged via a Mg-dependent methyl migration to produce 3-hydroxy-3-methyl-2-ketobutyrate (HMKB). In the reductase reaction, this 2-ketoacid undergoes a metal-dependent reduction by NADPH to yield (R)-2,3-dihydroxy-isovalerate. The protein is Ketol-acid reductoisomerase (NADP(+)) of Christiangramia forsetii (strain DSM 17595 / CGMCC 1.15422 / KT0803) (Gramella forsetii).